The following is a 75-amino-acid chain: Small ribosomal subunit protein bS18c (75 aa).

It belongs to the bacterial ribosomal protein bS18 family. Part of the 30S ribosomal subunit.

The protein resides in the plastid. The protein localises to the chloroplast. This is Small ribosomal subunit protein bS18c (rps18) from Marchantia polymorpha (Common liverwort).